A 355-amino-acid chain; its full sequence is 3-isopropylmalate dehydrogenase (355 aa).

The substrate site is built by arginine 90, arginine 100, arginine 128, and aspartate 222. 3 residues coordinate Mg(2+): aspartate 222, aspartate 246, and aspartate 250. Position 280-292 (280-292) interacts with NAD(+); the sequence is GSAPDIAGKGIAN.

This sequence belongs to the isocitrate and isopropylmalate dehydrogenases family. LeuB type 1 subfamily. In terms of assembly, homodimer. The cofactor is Mg(2+). Mn(2+) serves as cofactor.

It localises to the cytoplasm. It catalyses the reaction (2R,3S)-3-isopropylmalate + NAD(+) = 4-methyl-2-oxopentanoate + CO2 + NADH. It functions in the pathway amino-acid biosynthesis; L-leucine biosynthesis; L-leucine from 3-methyl-2-oxobutanoate: step 3/4. In terms of biological role, catalyzes the oxidation of 3-carboxy-2-hydroxy-4-methylpentanoate (3-isopropylmalate) to 3-carboxy-4-methyl-2-oxopentanoate. The product decarboxylates to 4-methyl-2 oxopentanoate. In Burkholderia lata (strain ATCC 17760 / DSM 23089 / LMG 22485 / NCIMB 9086 / R18194 / 383), this protein is 3-isopropylmalate dehydrogenase.